Consider the following 425-residue polypeptide: Dihydroorotase (425 aa).

H56 and H58 together coordinate Zn(2+). Residues 58–60 and N90 each bind substrate; that span reads HYR. The Zn(2+) site is built by D148, H175, and H228. Residue N274 participates in substrate binding. Zn(2+) is bound at residue D301. D301 is a catalytic residue. Substrate contacts are provided by residues H305 and 319-320; that span reads FG.

It belongs to the metallo-dependent hydrolases superfamily. DHOase family. Class I DHOase subfamily. Requires Zn(2+) as cofactor.

It carries out the reaction (S)-dihydroorotate + H2O = N-carbamoyl-L-aspartate + H(+). It participates in pyrimidine metabolism; UMP biosynthesis via de novo pathway; (S)-dihydroorotate from bicarbonate: step 3/3. In terms of biological role, catalyzes the reversible cyclization of carbamoyl aspartate to dihydroorotate. In Lactobacillus delbrueckii subsp. bulgaricus (strain ATCC BAA-365 / Lb-18), this protein is Dihydroorotase.